A 70-amino-acid polypeptide reads, in one-letter code: Conotoxin Pl171 (70 aa).

The signal sequence occupies residues 1–21 (MGMRMMFTMILLVVLVTTVVS). 2 disulfide bridges follow: Cys54–Cys61 and Cys55–Cys67. The residue at position 69 (Phe69) is a Phenylalanine amide.

Belongs to the conotoxin A superfamily. In terms of tissue distribution, expressed by the venom duct.

It is found in the secreted. Its function is as follows. Probable neurotoxin with unknown target. Possibly targets ion channels. The sequence is that of Conotoxin Pl171 from Conus planorbis (Planorbis cone).